Reading from the N-terminus, the 110-residue chain is Large ribosomal subunit protein uL22 (110 aa).

It belongs to the universal ribosomal protein uL22 family. In terms of assembly, part of the 50S ribosomal subunit.

Functionally, this protein binds specifically to 23S rRNA; its binding is stimulated by other ribosomal proteins, e.g. L4, L17, and L20. It is important during the early stages of 50S assembly. It makes multiple contacts with different domains of the 23S rRNA in the assembled 50S subunit and ribosome. Its function is as follows. The globular domain of the protein is located near the polypeptide exit tunnel on the outside of the subunit, while an extended beta-hairpin is found that lines the wall of the exit tunnel in the center of the 70S ribosome. This chain is Large ribosomal subunit protein uL22, found in Shigella flexneri serotype 5b (strain 8401).